A 163-amino-acid chain; its full sequence is Low molecular weight protein-tyrosine phosphatase A (163 aa).

The active-site Nucleophile is the Cys11. Arg17 is an active-site residue. The Proton donor role is filled by Asp126.

The protein belongs to the low molecular weight phosphotyrosine protein phosphatase family.

The catalysed reaction is O-phospho-L-tyrosyl-[protein] + H2O = L-tyrosyl-[protein] + phosphate. In terms of biological role, key virulence factor required for mycobacterial survival within host macrophages. Exhibits protein tyrosine phosphatase activity. Its function is as follows. Supports mycobacteria survival during infection by modulation of the phagosome maturation and modulation of the normal host signaling pathways, including host innate immune responses and cell apoptosis. This is Low molecular weight protein-tyrosine phosphatase A (ptpA) from Mycobacterium bovis (strain ATCC BAA-935 / AF2122/97).